We begin with the raw amino-acid sequence, 142 residues long: Hemoglobin subunit alpha (142 aa).

One can recognise a Globin domain in the interval 2-142 (VLSPTDKSNV…VSTVLTSKYR (141 aa)). Serine 4 bears the Phosphoserine mark. N6-succinyllysine occurs at positions 8 and 12. Position 17 is an N6-acetyllysine; alternate (lysine 17). At lysine 17 the chain carries N6-succinyllysine; alternate. At tyrosine 25 the chain carries Phosphotyrosine. N6-succinyllysine is present on lysine 41. Histidine 59 contributes to the O2 binding site. Position 88 (histidine 88) interacts with heme b. Serine 103 is modified (phosphoserine). Threonine 109 carries the post-translational modification Phosphothreonine. Serine 125 and serine 132 each carry phosphoserine. Threonine 135 and threonine 138 each carry phosphothreonine. Residue serine 139 is modified to Phosphoserine.

It belongs to the globin family. As to quaternary structure, heterotetramer of two alpha chains and two beta chains. Red blood cells.

Its function is as follows. Involved in oxygen transport from the lung to the various peripheral tissues. Hemopressin acts as an antagonist peptide of the cannabinoid receptor CNR1. Hemopressin-binding efficiently blocks cannabinoid receptor CNR1 and subsequent signaling. In Balaenoptera acutorostrata (Common minke whale), this protein is Hemoglobin subunit alpha (HBA).